The chain runs to 266 residues: Biotin--[acetyl-CoA-carboxylase] ligase (266 aa).

One can recognise a BPL/LPL catalytic domain in the interval 14–202 (RSLRDQLIGA…ELEARIIQWR (189 aa)). Residues 38–39 (ST), Gln-63, Arg-67, and Lys-138 each bind biotin.

Belongs to the biotin--protein ligase family. Monomer in solution. Forms dimers under specific crystallization conditions.

It catalyses the reaction biotin + L-lysyl-[protein] + ATP = N(6)-biotinyl-L-lysyl-[protein] + AMP + diphosphate + H(+). The enzyme catalyses biotin + ATP + H(+) = biotinyl-5'-AMP + diphosphate. It carries out the reaction biotinyl-5'-AMP + L-lysyl-[protein] = N(6)-biotinyl-L-lysyl-[protein] + AMP + 2 H(+). Binding of biotin and ATP significantly increases the thermal stability of BirA and leads to the formation of a high affinity holoenzyme complex. Its function is as follows. Catalyzes the transfer of biotin onto a conserved lysine residue of the biotin carboxyl carrier protein (BCCP) domain of acetyl-CoA carboxylase and converts it to active holo-BCCP. Forms an acyl-adenylate intermediate. Cannot use GTP or desthiobiotin. This Mycobacterium tuberculosis (strain ATCC 25618 / H37Rv) protein is Biotin--[acetyl-CoA-carboxylase] ligase.